We begin with the raw amino-acid sequence, 185 residues long: MTGKLIWLMGPSGSGKDSLLAELRLREQTQLLVAHRYITRDASAGSENHIALSEQEFFTRAGQNLLALSWHANGLYYGVGVEIDLWLHAGFDVLVNGSRAHLPQARARYQSALLPICLQVSPEILRQRLENRGRENASEINARLVRAARYTPQDCHTLNNDGSLCQSVDTLLTLIHQKEKHHACL.

10–17 is a binding site for ATP; that stretch reads GPSGSGKD.

This sequence belongs to the ribose 1,5-bisphosphokinase family.

It carries out the reaction alpha-D-ribose 1,5-bisphosphate + ATP = 5-phospho-alpha-D-ribose 1-diphosphate + ADP. The protein operates within metabolic intermediate biosynthesis; 5-phospho-alpha-D-ribose 1-diphosphate biosynthesis; 5-phospho-alpha-D-ribose 1-diphosphate from D-ribose 5-phosphate (route II): step 3/3. Catalyzes the phosphorylation of ribose 1,5-bisphosphate to 5-phospho-D-ribosyl alpha-1-diphosphate (PRPP). This is Ribose 1,5-bisphosphate phosphokinase PhnN from Shigella dysenteriae serotype 1 (strain Sd197).